Here is a 378-residue protein sequence, read N- to C-terminus: MLFKSFVTFTVLANALAAPLAHQHHQHKEEKRAVHVVTTTNVVVVTIGNGDQTTTFAAPSVAAESSVSVSVNTEPPQNHPTTTQDVASASTYPSSTDGSAASSSAAASSSSQAGSEPSGGVGSGGAKGITYSPYSDNGGCKSESQIASEIAQLSGFDVIRLYGVDCSQVEAVLKAKTSSQKIFAGIFDVSSITSGIESLAEAVKSCGSWDDIYTVSIGNELVNAGSATPSQIKAYVEEGRKALKAAGYTGPVVSVDTFIAVINNPDLCDYSDYMAVNAHAFFDGHVVAENSGAWVLQQIQRVWTACGGKKNVLITETGWPSRGDSNGVAVPSKSNQQAAISSIKSSCGASAILFTAFNDLWKADGPYNAEKYWGIYSN.

Positions 1–32 (MLFKSFVTFTVLANALAAPLAHQHHQHKEEKR) are cleaved as a signal peptide. The tract at residues 67–124 (VSVSVNTEPPQNHPTTTQDVASASTYPSSTDGSAASSSAAASSSSQAGSEPSGGVGSG) is disordered. Polar residues predominate over residues 72–93 (NTEPPQNHPTTTQDVASASTYP). The span at 94–116 (SSTDGSAASSSAAASSSSQAGSE) shows a compositional bias: low complexity. Glu-316 serves as the catalytic Nucleophile.

This sequence belongs to the glycosyl hydrolase 17 family. Component of a multiprotein complex of 250 kDa composed of at least HYR1, MP65, and PRA1. In terms of processing, glycosylated protein with a polysaccharide moiety composed exclusively of mannose and glucose at a ratio of 12.7 to 1. Contributes highly to the carbohydrate component of the matrix. Treatment with tunicamycin impairs glycosylation.

The protein localises to the secreted. The protein resides in the cell wall. In terms of biological role, surface mannoprotein required for hyphal morphogenesis, surface adherence, and pathogenicity. Contributes in a high proportion to the carbohydrate component of the matrix due to high levels of glycosylation and may play important roles during biofilm development and maintenance. Acts as a major antigen target of host cell-mediated immune response. Induces extensive T-cell proliferation of human peripheral blood mononuclear cells. Facilitates host dendritic cells maturation and promotes cytokine production through its glycosylated portion while its protein core is essentially involved in induction of T-cell response. The chain is Cell surface mannoprotein MP65 (MP65) from Candida albicans (strain SC5314 / ATCC MYA-2876) (Yeast).